A 235-amino-acid chain; its full sequence is 7-cyano-7-deazaguanine synthase (235 aa).

An ATP-binding site is contributed by 12–22 (FSGGQDSTTCL). 4 residues coordinate Zn(2+): Cys200, Cys215, Cys218, and Cys221.

It belongs to the QueC family. Requires Zn(2+) as cofactor.

The enzyme catalyses 7-carboxy-7-deazaguanine + NH4(+) + ATP = 7-cyano-7-deazaguanine + ADP + phosphate + H2O + H(+). It functions in the pathway purine metabolism; 7-cyano-7-deazaguanine biosynthesis. Functionally, catalyzes the ATP-dependent conversion of 7-carboxy-7-deazaguanine (CDG) to 7-cyano-7-deazaguanine (preQ(0)). The protein is 7-cyano-7-deazaguanine synthase of Leptothrix cholodnii (strain ATCC 51168 / LMG 8142 / SP-6) (Leptothrix discophora (strain SP-6)).